We begin with the raw amino-acid sequence, 253 residues long: Phosphate import ATP-binding protein PstB 1 (253 aa).

Residues 7–248 (LQIRDLSVYY…PKRKETEDYI (242 aa)) form the ABC transporter domain. Residue 39 to 46 (GPSGSGKS) coordinates ATP.

This sequence belongs to the ABC transporter superfamily. Phosphate importer (TC 3.A.1.7) family. As to quaternary structure, the complex is composed of two ATP-binding proteins (PstB), two transmembrane proteins (PstC and PstA) and a solute-binding protein (PstS).

The protein resides in the cell membrane. It carries out the reaction phosphate(out) + ATP + H2O = ADP + 2 phosphate(in) + H(+). In terms of biological role, part of the ABC transporter complex PstSACB involved in phosphate import. Responsible for energy coupling to the transport system. This is Phosphate import ATP-binding protein PstB 1 from Streptococcus pyogenes serotype M12 (strain MGAS9429).